Consider the following 447-residue polypeptide: Elongation factor 1-alpha (447 aa).

A tr-type G domain is found at lysine 5–serine 230. The G1 stretch occupies residues glycine 14 to serine 21. Glycine 14–serine 21 serves as a coordination point for GTP. N6,N6-dimethyllysine is present on lysine 55. A G2 region spans residues glycine 70–aspartate 74. Lysine 79 is modified (N6,N6,N6-trimethyllysine). Residues aspartate 91–glycine 94 are G3. GTP-binding positions include aspartate 91 to histidine 95 and asparagine 153 to aspartate 156. Positions asparagine 153–aspartate 156 are G4. Lysine 187 is subject to N6,N6,N6-trimethyllysine. The G5 stretch occupies residues serine 194–phenylalanine 196. Lysine 261 carries the N6-methyllysine modification. Glutamate 289 bears the 5-glutamyl glycerylphosphorylethanolamine mark. Lysine 306 is modified (N6,N6,N6-trimethyllysine). Glutamate 362 carries the 5-glutamyl glycerylphosphorylethanolamine modification. An N6,N6,N6-trimethyllysine modification is found at lysine 396.

The protein belongs to the TRAFAC class translation factor GTPase superfamily. Classic translation factor GTPase family. EF-Tu/EF-1A subfamily.

It localises to the cytoplasm. This protein promotes the GTP-dependent binding of aminoacyl-tRNA to the A-site of ribosomes during protein biosynthesis. The protein is Elongation factor 1-alpha of Vicia faba (Broad bean).